The primary structure comprises 204 residues: Ricin B-like lectin R40G3 (204 aa).

One can recognise a Ricin B-type lectin domain in the interval 54–200 (TVKVYCRANP…CEGDNQRWKI (147 aa)).

Expressed in shoots and lamina.

Its function is as follows. Lectin which binds carbohydrates in vitro. Interacts through its lectin domain with glycan structures containing specific motifs. The protein is Ricin B-like lectin R40G3 of Oryza sativa subsp. japonica (Rice).